A 301-amino-acid chain; its full sequence is Alpha-ketoglutarate-dependent sulfate ester dioxygenase (301 aa).

Substrate is bound at residue histidine 81. Histidine 108 and aspartate 110 together coordinate Fe cation. Valine 111 lines the substrate pocket. Residue threonine 135 participates in 2-oxoglutarate binding. A Fe cation-binding site is contributed by histidine 264. Arginine 275 and arginine 279 together coordinate 2-oxoglutarate.

The protein belongs to the TfdA dioxygenase family. In terms of assembly, homotetramer. It depends on Fe(2+) as a cofactor.

It catalyses the reaction a primary linear alkyl sulfate ester + 2-oxoglutarate + O2 = an aldehyde + sulfate + succinate + CO2 + H(+). It carries out the reaction 2-ethylhexyl sulfate + 2-oxoglutarate + O2 = 2-ethylhexanal + sulfate + succinate + CO2 + H(+). The enzyme catalyses decyl sulfate + 2-oxoglutarate + O2 = decanal + sulfate + succinate + CO2 + H(+). The catalysed reaction is hexyl sulfate + 2-oxoglutarate + O2 = hexanal + sulfate + succinate + CO2 + H(+). It catalyses the reaction nonyl sufate + 2-oxoglutarate + O2 = nonanal + sulfate + succinate + CO2 + H(+). With respect to regulation, strongly stimulated by ascorbate. Catalyzes the oxygenolytic cleavage of 2-ethylhexyl sulfate (2-EHS) in the presence of alpha-ketoglutarate to yield 2-ethyl-hexanal and succinate, the decarboxylated form of alpha-ketoglutarate. It can accept a wide range of alpha-keto acids including 2-oxo-valerate, 2-oxo-adipate, 2-oxo-octanoate, 3-methyl-2-oxo-butyrate, oxaloacetate-alpha-ketoadipate, and alpha-ketooctanoate. It can catalyze the cleavage of medium-chain alkyl sulfate esters such as butylsulfate, pentylsulfate, hexylsulfate, heptylsulfate, octylsulfate, nonylsulfate, decylsulfate and sodium dodecyl sulfate (SDS). The sequence is that of Alpha-ketoglutarate-dependent sulfate ester dioxygenase from Pseudomonas putida (Arthrobacter siderocapsulatus).